The primary structure comprises 521 residues: U4/U6 small nuclear ribonucleoprotein Prp4 (521 aa).

Lysine 26 is modified (N6-acetyllysine). WD repeat units follow at residues 229-268 (DDRP…LHTL), 271-318 (HNTN…VADI), 321-360 (HTVR…ILHQ), 363-402 (HSMG…IMFL), 405-444 (HLKE…VYTI), 447-487 (HQNL…LKTL), and 490-521 (HEGK…WMAE).

As to quaternary structure, component of the precatalytic spliceosome (spliceosome B complex). Component of the U4/U6-U5 tri-snRNP complex, a building block of the precatalytic spliceosome (spliceosome B complex). The U4/U6-U5 tri-snRNP complex is composed of the U4, U6 and U5 snRNAs and at least PRPF3, PRPF4, PRPF6, PRPF8, PRPF31, SNRNP200, TXNL4A, SNRNP40, SNRPB, SNRPD1, SNRPD2, SNRPD3, SNRPE, SNRPF, SNRPG, DDX23, CD2BP2, PPIH, SNU13, EFTUD2, SART1 and USP39, plus LSM2, LSM3, LSM4, LSM5, LSM6, LSM7 and LSM8. Interacts directly with PRPF18, PPIH and PRPF3. Part of a heteromeric complex containing PPIH, PRPF3 and PRPF4 that is stable in the absence of RNA. Interacts with ERCC6.

The protein resides in the nucleus. It localises to the nucleus speckle. Its function is as follows. Plays a role in pre-mRNA splicing as component of the U4/U6-U5 tri-snRNP complex that is involved in spliceosome assembly, and as component of the precatalytic spliceosome (spliceosome B complex). The protein is U4/U6 small nuclear ribonucleoprotein Prp4 (PRPF4) of Bos taurus (Bovine).